The primary structure comprises 251 residues: Protection of telomeres homolog 2 (251 aa).

Residues 221–251 form a disordered region; it reads ELDNWPEGPPKTFAEAIARANNSRRPRDPPQ.

It belongs to the telombin family.

It localises to the nucleus. Its subcellular location is the chromosome. It is found in the telomere. Functionally, telomeric DNA-binding protein, which binds to two or more single-stranded G-rich repeat sequences (G-strand), with high specificity to the 5'-TTAGGC-3' sequence. In addition, repeat sequence binding requires a 3' single-stranded telomeric overhang. Acts redundantly with pot-1 to negatively regulate telomerase-mediated telomere extension. Also regulates telomere length by the telomerase-independent telomere maintenance pathway called ALT (alternative lengthening of telomeres). Does not appear to have a role in anchoring telomeres to the nuclear envelope. The protein is Protection of telomeres homolog 2 of Caenorhabditis elegans.